The primary structure comprises 573 residues: Putative ATP-dependent RNA helicase R563 (573 aa).

The region spanning 57-233 (INPKTPYKGL…ALTMNLLVRN (177 aa)) is the Helicase ATP-binding domain. 70 to 77 (HRIGAGKT) serves as a coordination point for ATP. Positions 179 to 182 (DEVH) match the DEAH box motif. One can recognise a Helicase C-terminal domain in the interval 374–551 (KILRKIKRCN…AFEKALKEAA (178 aa)).

This sequence belongs to the DEAD box helicase family. DEAH subfamily.

Its subcellular location is the virion. It catalyses the reaction ATP + H2O = ADP + phosphate + H(+). The polypeptide is Putative ATP-dependent RNA helicase R563 (Acanthamoeba polyphaga mimivirus (APMV)).